The sequence spans 350 residues: Protein RecA (350 aa).

68-75 (GPESSGKT) contacts ATP.

Belongs to the RecA family.

Its subcellular location is the cytoplasm. Its function is as follows. Can catalyze the hydrolysis of ATP in the presence of single-stranded DNA, the ATP-dependent uptake of single-stranded DNA by duplex DNA, and the ATP-dependent hybridization of homologous single-stranded DNAs. It interacts with LexA causing its activation and leading to its autocatalytic cleavage. The polypeptide is Protein RecA (Mycolicibacterium vanbaalenii (strain DSM 7251 / JCM 13017 / BCRC 16820 / KCTC 9966 / NRRL B-24157 / PYR-1) (Mycobacterium vanbaalenii)).